The sequence spans 413 residues: Cell division protein FtsA (413 aa).

The protein belongs to the FtsA/MreB family. In terms of assembly, self-interacts. Interacts with FtsZ.

It localises to the cell inner membrane. Its function is as follows. Cell division protein that is involved in the assembly of the Z ring. May serve as a membrane anchor for the Z ring. This is Cell division protein FtsA from Borreliella burgdorferi (strain ATCC 35210 / DSM 4680 / CIP 102532 / B31) (Borrelia burgdorferi).